Reading from the N-terminus, the 286-residue chain is NAD kinase (286 aa).

Residue aspartate 74 is the Proton acceptor of the active site. NAD(+) contacts are provided by residues 74–75 (DG), 148–149 (ND), aspartate 178, alanine 186, 189–194 (TAYNLS), and glutamine 244.

The protein belongs to the NAD kinase family. A divalent metal cation serves as cofactor.

The protein resides in the cytoplasm. It catalyses the reaction NAD(+) + ATP = ADP + NADP(+) + H(+). Its function is as follows. Involved in the regulation of the intracellular balance of NAD and NADP, and is a key enzyme in the biosynthesis of NADP. Catalyzes specifically the phosphorylation on 2'-hydroxyl of the adenosine moiety of NAD to yield NADP. The sequence is that of NAD kinase from Campylobacter jejuni subsp. doylei (strain ATCC BAA-1458 / RM4099 / 269.97).